We begin with the raw amino-acid sequence, 493 residues long: Probable malate:quinone oxidoreductase (493 aa).

The protein belongs to the MQO family. It depends on FAD as a cofactor.

The catalysed reaction is (S)-malate + a quinone = a quinol + oxaloacetate. It participates in carbohydrate metabolism; tricarboxylic acid cycle; oxaloacetate from (S)-malate (quinone route): step 1/1. The sequence is that of Probable malate:quinone oxidoreductase from Mycobacterium marinum (strain ATCC BAA-535 / M).